The chain runs to 180 residues: Acireductone dioxygenase (180 aa).

Residues H97, H99, E103, and H141 each coordinate Fe(2+). Ni(2+)-binding residues include H97, H99, E103, and H141.

The protein belongs to the acireductone dioxygenase (ARD) family. In terms of assembly, monomer. Requires Fe(2+) as cofactor. Ni(2+) serves as cofactor.

It carries out the reaction 1,2-dihydroxy-5-(methylsulfanyl)pent-1-en-3-one + O2 = 3-(methylsulfanyl)propanoate + CO + formate + 2 H(+). The catalysed reaction is 1,2-dihydroxy-5-(methylsulfanyl)pent-1-en-3-one + O2 = 4-methylsulfanyl-2-oxobutanoate + formate + 2 H(+). It participates in amino-acid biosynthesis; L-methionine biosynthesis via salvage pathway; L-methionine from S-methyl-5-thio-alpha-D-ribose 1-phosphate: step 5/6. Catalyzes 2 different reactions between oxygen and the acireductone 1,2-dihydroxy-3-keto-5-methylthiopentene (DHK-MTPene) depending upon the metal bound in the active site. Fe-containing acireductone dioxygenase (Fe-ARD) produces formate and 2-keto-4-methylthiobutyrate (KMTB), the alpha-ketoacid precursor of methionine in the methionine recycle pathway. Ni-containing acireductone dioxygenase (Ni-ARD) produces methylthiopropionate, carbon monoxide and formate, and does not lie on the methionine recycle pathway. This Yersinia enterocolitica serotype O:8 / biotype 1B (strain NCTC 13174 / 8081) protein is Acireductone dioxygenase.